The sequence spans 380 residues: DNA primase small subunit PriS (380 aa).

Active-site residues include aspartate 101, aspartate 103, and aspartate 282.

The protein belongs to the eukaryotic-type primase small subunit family. In terms of assembly, heterodimer of a small subunit (PriS) and a large subunit (PriL). Mg(2+) serves as cofactor. Requires Mn(2+) as cofactor.

Catalytic subunit of DNA primase, an RNA polymerase that catalyzes the synthesis of short RNA molecules used as primers for DNA polymerase during DNA replication. The small subunit contains the primase catalytic core and has DNA synthesis activity on its own. Binding to the large subunit stabilizes and modulates the activity, increasing the rate of DNA synthesis while decreasing the length of the DNA fragments, and conferring RNA synthesis capability. The DNA polymerase activity may enable DNA primase to also catalyze primer extension after primer synthesis. May also play a role in DNA repair. The sequence is that of DNA primase small subunit PriS from Hyperthermus butylicus (strain DSM 5456 / JCM 9403 / PLM1-5).